Reading from the N-terminus, the 139-residue chain is Putative pre-16S rRNA nuclease (139 aa).

Belongs to the YqgF nuclease family.

It is found in the cytoplasm. Functionally, could be a nuclease involved in processing of the 5'-end of pre-16S rRNA. This is Putative pre-16S rRNA nuclease from Streptococcus mutans serotype c (strain ATCC 700610 / UA159).